A 172-amino-acid chain; its full sequence is MLDAFAKVVAQADARGEFLSNVQLDGLSAMVADGNKRLDAVNAINSNASSIVTSAARALFAEQPQLIQPGGNAYTNRRMAACLRDMEIILRYVSYAAIAGDSSVLDDRCLNGLKETYQALGTPGASVAAGVQKMKEAAIAVANDSSNVTVGDCSALMAEIASYFDRAAAAVA.

N4-methylasparagine is present on Asn-72. (2R,3E)-phycocyanobilin contacts are provided by Cys-82 and Cys-153.

This sequence belongs to the phycobiliprotein family. As to quaternary structure, heterodimer of an alpha and a beta subunit, which further assembles into trimers and the trimers into hexamers. The basic functional unit of phycobiliproteins is a ring-shaped hexamer formed from two back-to-back trimers contacting via the alpha chain subunits. The trimers are composed of alpha/beta subunit heterodimers arranged around a three-fold axis of symmetry. The phycoerythrins also contain a gamma subunit which is located in the center of the hexamer. Contains two covalently linked bilin chromophores.

The protein localises to the plastid. Its subcellular location is the chloroplast thylakoid membrane. Functionally, light-harvesting photosynthetic bile pigment-protein from the phycobiliprotein complex (phycobilisome, PBS). Phycocyanin is the major phycobiliprotein in the PBS rod. This chain is C-phycocyanin beta chain (cpcB), found in Rhodella violacea (Red alga).